The chain runs to 313 residues: Formimidoylglutamase (313 aa).

Histidine 130, aspartate 155, histidine 157, aspartate 159, aspartate 241, and aspartate 243 together coordinate Mn(2+).

The protein belongs to the arginase family. Mn(2+) is required as a cofactor.

The enzyme catalyses N-formimidoyl-L-glutamate + H2O = formamide + L-glutamate. It participates in amino-acid degradation; L-histidine degradation into L-glutamate; L-glutamate from N-formimidoyl-L-glutamate (hydrolase route): step 1/1. Its function is as follows. Catalyzes the conversion of N-formimidoyl-L-glutamate to L-glutamate and formamide. The polypeptide is Formimidoylglutamase (Citrobacter koseri (strain ATCC BAA-895 / CDC 4225-83 / SGSC4696)).